The following is a 643-amino-acid chain: Alpha-dioxygenase 1 (643 aa).

The active-site Proton acceptor is His167. Asp168 lines the Ca(2+) pocket. Heme b is bound at residue His172. Ca(2+)-binding residues include Thr220, Trp222, Asp224, and Ser226. Heme b is bound by residues His392, Arg489, and Arg493.

The protein belongs to the peroxidase family. The cofactor is heme b. It depends on Ca(2+) as a cofactor.

Alpha-dioxygenase that catalyzes the primary oxygenation step of a variety of 14-20 carbon fatty acids, containing up to three unsaturated bonds, into their corresponding 2R-hydroperoxides. Involved in the production of oxylipins that function in cell signaling, wound healing, and protection from infection. The lipid-derived signaling pathway is involved in the initial response of hot pepper plants to pathogen infection. The protein is Alpha-dioxygenase 1 of Capsicum annuum (Capsicum pepper).